The following is a 1595-amino-acid chain: Pentafunctional AROM polypeptide (1595 aa).

Positions 1-384 are 3-dehydroquinate synthase; that stretch reads MGVPTKISIL…HEPRASTVSN (384 aa). NAD(+) contacts are provided by residues 44–46, 81–84, 114–116, and aspartate 119; these read DTN, ESSK, and GGV. Residue arginine 130 coordinates 7-phospho-2-dehydro-3-deoxy-D-arabino-heptonate. 139-140 lines the NAD(+) pocket; sequence TT. Aspartate 146 and lysine 152 together coordinate 7-phospho-2-dehydro-3-deoxy-D-arabino-heptonate. NAD(+) is bound at residue lysine 161. Asparagine 162 serves as a coordination point for 7-phospho-2-dehydro-3-deoxy-D-arabino-heptonate. NAD(+) is bound by residues 179 to 182 and asparagine 190; that span reads FLNT. A Zn(2+)-binding site is contributed by glutamate 194. Residues 194-197 and lysine 250 each bind 7-phospho-2-dehydro-3-deoxy-D-arabino-heptonate; that span reads EVIK. The active-site Proton acceptor; for 3-dehydroquinate synthase activity is glutamate 260. Residues 264-268 and histidine 271 contribute to the 7-phospho-2-dehydro-3-deoxy-D-arabino-heptonate site; that span reads RNLLN. Histidine 271 lines the Zn(2+) pocket. Histidine 275 functions as the Proton acceptor; for 3-dehydroquinate synthase activity in the catalytic mechanism. Residues histidine 287 and lysine 356 each contribute to the 7-phospho-2-dehydro-3-deoxy-D-arabino-heptonate site. Residue histidine 287 coordinates Zn(2+). The tract at residues 397–842 is EPSP synthase; the sequence is VSPGVPKGLD…WDSLAQTFKV (446 aa). The For EPSP synthase activity role is filled by cysteine 824. Positions 866–1057 are shikimate kinase; it reads ASIFIIGMRG…RRKENTFFVS (192 aa). ATP is bound at residue 872–879; that stretch reads GMRGAGKT. Positions 1058 to 1278 are 3-dehydroquinase; the sequence is LTLPDLSLAA…AAPGQLSARE (221 aa). The active-site Proton acceptor; for 3-dehydroquinate dehydratase activity is histidine 1181. Residue lysine 1209 is the Schiff-base intermediate with substrate; for 3-dehydroquinate dehydratase activity of the active site. Residues 1291–1595 are shikimate dehydrogenase; sequence AKKFAVIGNP…MGVSPSEDIL (305 aa).

This sequence in the N-terminal section; belongs to the sugar phosphate cyclases superfamily. Dehydroquinate synthase family. The protein in the 2nd section; belongs to the EPSP synthase family. It in the 3rd section; belongs to the shikimate kinase family. In the 4th section; belongs to the type-I 3-dehydroquinase family. This sequence in the C-terminal section; belongs to the shikimate dehydrogenase family. Homodimer. It depends on Zn(2+) as a cofactor.

It is found in the cytoplasm. It catalyses the reaction 7-phospho-2-dehydro-3-deoxy-D-arabino-heptonate = 3-dehydroquinate + phosphate. The enzyme catalyses 3-dehydroquinate = 3-dehydroshikimate + H2O. It carries out the reaction shikimate + NADP(+) = 3-dehydroshikimate + NADPH + H(+). The catalysed reaction is shikimate + ATP = 3-phosphoshikimate + ADP + H(+). It catalyses the reaction 3-phosphoshikimate + phosphoenolpyruvate = 5-O-(1-carboxyvinyl)-3-phosphoshikimate + phosphate. It participates in metabolic intermediate biosynthesis; chorismate biosynthesis; chorismate from D-erythrose 4-phosphate and phosphoenolpyruvate: step 2/7. The protein operates within metabolic intermediate biosynthesis; chorismate biosynthesis; chorismate from D-erythrose 4-phosphate and phosphoenolpyruvate: step 3/7. It functions in the pathway metabolic intermediate biosynthesis; chorismate biosynthesis; chorismate from D-erythrose 4-phosphate and phosphoenolpyruvate: step 4/7. Its pathway is metabolic intermediate biosynthesis; chorismate biosynthesis; chorismate from D-erythrose 4-phosphate and phosphoenolpyruvate: step 5/7. It participates in metabolic intermediate biosynthesis; chorismate biosynthesis; chorismate from D-erythrose 4-phosphate and phosphoenolpyruvate: step 6/7. Its function is as follows. The AROM polypeptide catalyzes 5 consecutive enzymatic reactions in prechorismate polyaromatic amino acid biosynthesis. The polypeptide is Pentafunctional AROM polypeptide (Ajellomyces capsulatus (strain G186AR / H82 / ATCC MYA-2454 / RMSCC 2432) (Darling's disease fungus)).